The primary structure comprises 240 residues: Sugar fermentation stimulation protein homolog (240 aa).

It belongs to the SfsA family.

The protein is Sugar fermentation stimulation protein homolog of Methanothermobacter thermautotrophicus (strain ATCC 29096 / DSM 1053 / JCM 10044 / NBRC 100330 / Delta H) (Methanobacterium thermoautotrophicum).